A 179-amino-acid chain; its full sequence is MDIKKIPVGKNPPQDVNVIIEIPLLADPVKYEVDKESGAMFVDRFLHTAMHYPCNYGFVPHTLSDDGDPVDVMVVGRIPVAVGSVMRTRPVGVLYMEDEAGRDEKILGVPHSKLYPYHDNVNNFGDLRPIELRRIEHFFAHYKDLEEGKWVKILGWGNYKEAWDVIERGIAAEAAHKKV.

Residues Lys30, Arg44, and Tyr56 each contribute to the substrate site. Mg(2+)-binding residues include Asp66, Asp71, and Asp103. Tyr142 contributes to the substrate binding site.

This sequence belongs to the PPase family. In terms of assembly, homohexamer. The cofactor is Mg(2+).

The protein resides in the cytoplasm. The catalysed reaction is diphosphate + H2O = 2 phosphate + H(+). Its function is as follows. Catalyzes the hydrolysis of inorganic pyrophosphate (PPi) forming two phosphate ions. The sequence is that of Inorganic pyrophosphatase from Rhodospirillum rubrum (strain ATCC 11170 / ATH 1.1.1 / DSM 467 / LMG 4362 / NCIMB 8255 / S1).